Here is a 195-residue protein sequence, read N- to C-terminus: Putative NADH dehydrogenase/NAD(P)H nitroreductase Bcep18194_B1060 (195 aa).

The protein belongs to the nitroreductase family. HadB/RutE subfamily. It depends on FMN as a cofactor.

The protein is Putative NADH dehydrogenase/NAD(P)H nitroreductase Bcep18194_B1060 of Burkholderia lata (strain ATCC 17760 / DSM 23089 / LMG 22485 / NCIMB 9086 / R18194 / 383).